The following is a 207-amino-acid chain: A-type ATP synthase subunit E (207 aa).

The protein belongs to the V-ATPase E subunit family. Has multiple subunits with at least A(3), B(3), C, D, E, F, H, I and proteolipid K(x).

It is found in the cell membrane. In terms of biological role, component of the A-type ATP synthase that produces ATP from ADP in the presence of a proton gradient across the membrane. This is A-type ATP synthase subunit E from Methanosphaera stadtmanae (strain ATCC 43021 / DSM 3091 / JCM 11832 / MCB-3).